A 258-amino-acid chain; its full sequence is Ribosomal RNA small subunit methyltransferase J (258 aa).

Residues 123 to 124 and D177 each bind S-adenosyl-L-methionine; that span reads ER. The disordered stretch occupies residues 232–258; the sequence is IDGPKPSHSLEGKSSRYDIYPKKALKA. Residues 239-252 are compositionally biased toward basic and acidic residues; the sequence is HSLEGKSSRYDIYP.

It belongs to the methyltransferase superfamily. RsmJ family.

The protein resides in the cytoplasm. It catalyses the reaction guanosine(1516) in 16S rRNA + S-adenosyl-L-methionine = N(2)-methylguanosine(1516) in 16S rRNA + S-adenosyl-L-homocysteine + H(+). In terms of biological role, specifically methylates the guanosine in position 1516 of 16S rRNA. This Pseudomonas putida (strain GB-1) protein is Ribosomal RNA small subunit methyltransferase J.